The sequence spans 178 residues: Ribosome maturation factor RimP (178 aa).

This sequence belongs to the RimP family.

The protein localises to the cytoplasm. In terms of biological role, required for maturation of 30S ribosomal subunits. In Streptococcus pyogenes serotype M18 (strain MGAS8232), this protein is Ribosome maturation factor RimP.